The following is a 200-amino-acid chain: High frequency lysogenization protein HflD homolog (200 aa).

Belongs to the HflD family.

It is found in the cytoplasm. Its subcellular location is the cell inner membrane. The sequence is that of High frequency lysogenization protein HflD homolog from Pseudoalteromonas translucida (strain TAC 125).